Consider the following 345-residue polypeptide: Anthranilate phosphoribosyltransferase (345 aa).

Residues Gly79, 82-83, Thr87, 89-92, 106-114, and Ser118 each bind 5-phospho-alpha-D-ribose 1-diphosphate; these read GD, NVST, and KHGNRAVSG. Gly79 contributes to the anthranilate binding site. Ser91 contributes to the Mg(2+) binding site. Asn109 contributes to the anthranilate binding site. Arg164 contacts anthranilate. Mg(2+) contacts are provided by Asp223 and Glu224.

It belongs to the anthranilate phosphoribosyltransferase family. As to quaternary structure, homodimer. Mg(2+) is required as a cofactor.

It catalyses the reaction N-(5-phospho-beta-D-ribosyl)anthranilate + diphosphate = 5-phospho-alpha-D-ribose 1-diphosphate + anthranilate. Its pathway is amino-acid biosynthesis; L-tryptophan biosynthesis; L-tryptophan from chorismate: step 2/5. Functionally, catalyzes the transfer of the phosphoribosyl group of 5-phosphorylribose-1-pyrophosphate (PRPP) to anthranilate to yield N-(5'-phosphoribosyl)-anthranilate (PRA). The sequence is that of Anthranilate phosphoribosyltransferase from Sulfurisphaera tokodaii (strain DSM 16993 / JCM 10545 / NBRC 100140 / 7) (Sulfolobus tokodaii).